We begin with the raw amino-acid sequence, 94 residues long: Large ribosomal subunit protein eL42 (94 aa).

4 residues coordinate Zn(2+): C11, C14, C71, and C74. The C4-type zinc-finger motif lies at 11 to 74; it reads CPYCKRHTIH…LDLRFVCTVC (64 aa).

It belongs to the eukaryotic ribosomal protein eL42 family. As to quaternary structure, part of the 50S ribosomal subunit. Zn(2+) serves as cofactor.

Binds to the 23S rRNA. This Pyrococcus horikoshii (strain ATCC 700860 / DSM 12428 / JCM 9974 / NBRC 100139 / OT-3) protein is Large ribosomal subunit protein eL42.